A 451-amino-acid chain; its full sequence is 3-carboxy-cis,cis-muconate cycloisomerase (451 aa).

Belongs to the class-II fumarase/aspartase family.

The enzyme catalyses 2-(carboxymethyl)-5-oxo-2,5-dihydro-2-furoate = 3-carboxy-cis,cis-muconate + H(+). Catalyzes an anti cycloisomerization. This Bradyrhizobium diazoefficiens (strain JCM 10833 / BCRC 13528 / IAM 13628 / NBRC 14792 / USDA 110) protein is 3-carboxy-cis,cis-muconate cycloisomerase (pcaB).